The following is a 301-amino-acid chain: Fructokinase (301 aa).

Zn(2+) contacts are provided by histidine 165, cysteine 181, histidine 184, and cysteine 187.

The protein belongs to the ROK (NagC/XylR) family. Mg(2+) is required as a cofactor.

It catalyses the reaction D-fructose + ATP = D-fructose 6-phosphate + ADP + H(+). With respect to regulation, inhibition by zinc ions. This chain is Fructokinase (frk), found in Zymomonas mobilis subsp. mobilis (strain ATCC 31821 / ZM4 / CP4).